A 383-amino-acid chain; its full sequence is Retrovirus-related Pol polyprotein from type-1 retrotransposable element R1 3 (383 aa).

One can recognise a Reverse transcriptase domain in the interval 1-88 (VDAFADDLLL…DRVRYLGVNV (88 aa)). The tract at residues 229 to 383 (LSLHECRELV…VQRMRENEES (155 aa)) is nucleic acid-binding endonuclease.

It catalyses the reaction DNA(n) + a 2'-deoxyribonucleoside 5'-triphosphate = DNA(n+1) + diphosphate. This is Retrovirus-related Pol polyprotein from type-1 retrotransposable element R1 3 from Nasonia vitripennis (Parasitic wasp).